Consider the following 201-residue polypeptide: MAAAVAGPEIERLIQLLAKLPGLGPRSARRAALHLIKKREALMAPLASALQVAIERIQVCKVCGNIDTQNPCTVCTDPRRDPSIIVVVADVADLWALERAHAASGRYHVLGATLSPLDGVGPDDLSIDALVARAHDPQVSEIVLALNATVDGQTTAHYITDLLMEAGVKVTRLAHGVPVGGELDYLDEGTLSAAMRQRTLF.

The C4-type zinc-finger motif lies at 60–75 (CKVCGNIDTQNPCTVC). Positions 83-178 (SIIVVVADVA…KVTRLAHGVP (96 aa)) constitute a Toprim domain.

It belongs to the RecR family.

In terms of biological role, may play a role in DNA repair. It seems to be involved in an RecBC-independent recombinational process of DNA repair. It may act with RecF and RecO. The chain is Recombination protein RecR from Rhodopseudomonas palustris (strain BisB18).